A 166-amino-acid polypeptide reads, in one-letter code: MFPMVTEFMNYGQQTVRAARYIGQGFMITLSHANRLPVTIQYPYEKLITSERFRGRIHFEFDKCIACEVCVRVCPIDLPVVDWKLETDIRKKRLLNYSIDFGICIFCGNCVEYCPTNCLSMTEEYELSTYDRHELNYNQIALGRVPMSIIDDYTIRTILNLPEIKT.

4Fe-4S ferredoxin-type domains lie at 55 to 84 and 95 to 124; these read GRIH…VDWK and LNYS…MTEE. [4Fe-4S] cluster-binding residues include C64, C67, C70, C74, C104, C107, C110, and C114.

Belongs to the complex I 23 kDa subunit family. In terms of assembly, NDH is composed of at least 16 different subunits, 5 of which are encoded in the nucleus. [4Fe-4S] cluster serves as cofactor.

The protein localises to the plastid. Its subcellular location is the chloroplast thylakoid membrane. The catalysed reaction is a plastoquinone + NADH + (n+1) H(+)(in) = a plastoquinol + NAD(+) + n H(+)(out). It carries out the reaction a plastoquinone + NADPH + (n+1) H(+)(in) = a plastoquinol + NADP(+) + n H(+)(out). NDH shuttles electrons from NAD(P)H:plastoquinone, via FMN and iron-sulfur (Fe-S) centers, to quinones in the photosynthetic chain and possibly in a chloroplast respiratory chain. The immediate electron acceptor for the enzyme in this species is believed to be plastoquinone. Couples the redox reaction to proton translocation, and thus conserves the redox energy in a proton gradient. This Ambrosia trifida (Giant ragweed) protein is NAD(P)H-quinone oxidoreductase subunit I, chloroplastic.